Consider the following 783-residue polypeptide: Aconitate hydratase, mitochondrial (783 aa).

Residues 1 to 25 constitute a mitochondrion transit peptide; that stretch reads MITTRLARMGALAPKSRLLFGTRGM. Residues glutamine 102 and 195-197 contribute to the substrate site; that span reads DSH. Positions 388, 451, and 454 each coordinate [4Fe-4S] cluster. 2 residues coordinate substrate: arginine 477 and arginine 482. The segment at 524-555 is disordered; it reads EFKLKAPTGDGLPSRGYDPGRDTYQAPPTDRS. Residues arginine 610 and 673-674 each bind substrate; that span reads SR.

Belongs to the aconitase/IPM isomerase family. [4Fe-4S] cluster serves as cofactor.

The protein resides in the mitochondrion. It carries out the reaction citrate = D-threo-isocitrate. The catalysed reaction is (2R)-homocitrate = cis-homoaconitate + H2O. Its pathway is carbohydrate metabolism; tricarboxylic acid cycle; isocitrate from oxaloacetate: step 2/2. The protein operates within amino-acid biosynthesis; L-lysine biosynthesis via AAA pathway; L-alpha-aminoadipate from 2-oxoglutarate: step 2/5. In terms of biological role, catalyzes the isomerization of citrate to isocitrate via cis-aconitate, a step in the citric acid cycle. Also catalyzes the reversible dehydration of (R)-homocitrate to cis-homoaconitate, a step in the alpha-aminoadipate pathway for lysine biosynthesis. The chain is Aconitate hydratase, mitochondrial (acoA) from Emericella nidulans (strain FGSC A4 / ATCC 38163 / CBS 112.46 / NRRL 194 / M139) (Aspergillus nidulans).